The sequence spans 494 residues: Ammonium transporter Rh type C (494 aa).

Topologically, residues 1–22 (MGNFIQGCKDYFSQQKNTNIRL) are cytoplasmic. A helical transmembrane segment spans residues 23-43 (TLPVVCFVWQIAMIILFGVFI). Residues 44–74 (RYDEESDTHWVETKAHDNITSDIENDFYFRY) are Extracellular-facing. Residue asparagine 61 is glycosylated (N-linked (GlcNAc...) asparagine). The chain crosses the membrane as a helical span at residues 75 to 95 (PSFQDVHVMIFVGFGFLMTFL). Residues 96-99 (KRYS) lie on the Cytoplasmic side of the membrane. The chain crosses the membrane as a helical span at residues 100 to 120 (FGAVGFNFLIASFGLQWALLM). Over 121 to 133 (QGWFHSLDPQTGK) the chain is Extracellular. A helical transmembrane segment spans residues 134–154 (IFIGVESLINADFCVAGCLIA). Residues 155-166 (YGAVLGKVSPVQ) lie on the Cytoplasmic side of the membrane. The chain crosses the membrane as a helical span at residues 167 to 187 (LLVMTLFGVTLFAVEEYIILN). Over 188-194 (LLHARDA) the chain is Extracellular. The helical transmembrane segment at 195-215 (GGSMVIHTFGGYYGLTISWVL) threads the bilayer. Over 216-234 (YRPNLHQSKRMQGSVYHSD) the chain is Cytoplasmic. A helical membrane pass occupies residues 235-255 (IFAMIGTLFLWMFWPSFNSAI). The Extracellular portion of the chain corresponds to 256-265 (TDHGDGQHRA). A helical transmembrane segment spans residues 266-286 (VINTYLCLASTVLTTVAISSF). At 287–297 (SQKTGKLDMVH) the chain is on the cytoplasmic side. Residues 298 to 318 (IQNSTLAGGVALGTAAEFMIS) traverse the membrane as a helical segment. Proline 319 is a topological domain (extracellular). The chain crosses the membrane as a helical span at residues 320–340 (YGALIVGFLCGIISTMGYIFI). Topologically, residues 341 to 358 (SPFLEKTLKIQDTCGIHN) are cytoplasmic. Residues 359 to 379 (LHAMPGVIGGIVGAITAAAAS) form a helical membrane-spanning segment. The Extracellular segment spans residues 380-411 (ESVYGKHALINTFDFTGDFKDRTVLTQGGYQA). Residues 412-432 (AGMCVSIVFGVAGGAIVGSIL) form a helical membrane-spanning segment. Topologically, residues 433 to 494 (KLPIWGDPAD…SNFSVEHCES (62 aa)) are cytoplasmic.

The protein belongs to the ammonium transporter (TC 2.A.49) family. Rh subfamily. In terms of assembly, homotrimer.

The protein resides in the apical cell membrane. Functionally, functions as an ammonia transporter. May play a role in the elimination of ammonia in the gill. The sequence is that of Ammonium transporter Rh type C (rhcg) from Oncorhynchus mykiss (Rainbow trout).